Consider the following 275-residue polypeptide: MPGLRAALPAALLLLSSFPPAAAERLPWPQVPGVMRPLNPSHREAVWAAWTALHYINSHEASPSRPLALHKVVKAASKMIPRLGWKYYVHCTTEGYIHGENAGSCFATVLYLKKSPPVVHGKCVHAQNKKQIQEEDHRFYEYLQHQKKPITANYIPDSNGNIAHDHLQLWGLAIVGSSYIMWKQSTEHTGYLLAQVSSVKQQIRKDNAVAFKFIVLLHEIPTQQLNVCHMYLVWTLGHPIRVKYSCAPDNHGLEDGSGQDSGSAAGTSHETKGNF.

The signal sequence occupies residues 1-23 (MPGLRAALPAALLLLSSFPPAAA). Cystatin LXN-type domains follow at residues 32 to 131 (PGVM…NKKQ) and 151 to 255 (TANY…GLED). A disordered region spans residues 254–275 (EDGSGQDSGSAAGTSHETKGNF). Low complexity predominate over residues 256–268 (GSGQDSGSAAGTS).

This sequence belongs to the protease inhibitor I47 (latexin) family. Expressed at high levels in the uterine and isthmus regions of the oviduct, and concentrated in the eggshell.

It is found in the secreted. In terms of biological role, component of the matrix of the eggshell. In Gallus gallus (Chicken), this protein is Ovocalyxin-32.